A 205-amino-acid polypeptide reads, in one-letter code: Inactive ribonuclease-like protein 9 (205 aa).

The signal sequence occupies residues 1 to 24; it reads MMLITTHSLLLLLLLLQLLQPLQF. 3 disulfide bridges follow: Cys-97–Cys-152, Cys-115–Cys-167, and Cys-122–Cys-129. N-linked (GlcNAc...) asparagine glycans are attached at residues Asn-130 and Asn-142.

The protein belongs to the pancreatic ribonuclease family.

The protein localises to the secreted. Its function is as follows. Does not exhibit any ribonuclease activity. This chain is Inactive ribonuclease-like protein 9 (RNASE9), found in Cebus capucinus (White-faced sapajou).